Reading from the N-terminus, the 314-residue chain is D-alanine--D-alanine ligase (314 aa).

The ATP-grasp domain occupies 112–307 (KQVWQSLGLP…FQQLVLSILD (196 aa)). An ATP-binding site is contributed by 138–193 (AQMLGFPLIVKPAHEGSSIGMAKVGDVAELIAAWRAASAYDAQVLVEQWIQGPEFT). Residues Asp261, Glu274, and Asn276 each contribute to the Mg(2+) site.

It belongs to the D-alanine--D-alanine ligase family. The cofactor is Mg(2+). It depends on Mn(2+) as a cofactor.

It localises to the cytoplasm. The enzyme catalyses 2 D-alanine + ATP = D-alanyl-D-alanine + ADP + phosphate + H(+). It participates in cell wall biogenesis; peptidoglycan biosynthesis. Its function is as follows. Cell wall formation. This chain is D-alanine--D-alanine ligase, found in Stutzerimonas stutzeri (strain A1501) (Pseudomonas stutzeri).